The following is a 187-amino-acid chain: MNLQHHFLIAMPALQDSVFKRSVVYICEHNEDGAMGLIINKPMDQFSVENVLEKLKIDPTPRDPAIRLDKPVFIGGPLADDRGFILHTPCSDFGSSISISEDTMITTSKDVLETLGTLKQPKNTLVALGYSAWENGQLEEELLENAWLTTPADKDILFHTPIAERWRAAARKLGIDIHNISTEAGHA.

It belongs to the UPF0301 (AlgH) family.

The protein is UPF0301 protein ECA3925 of Pectobacterium atrosepticum (strain SCRI 1043 / ATCC BAA-672) (Erwinia carotovora subsp. atroseptica).